A 214-amino-acid chain; its full sequence is MGCFITFEGIEGCGKTTQIKLLEQHLAEKGFKVLLTREPGGCPIADQIRAILLDAANSAMTPSAELLLYAAARAQHVEEVIKPALADDCIVLCDRFTDATVAYQGYGRGLDLDSIGYLNQLATSGLKPQLTILLDCPVEVGLKRALARINGISAGAREERFELESTLFHQKVRNGYLKLAENEKGRFLIVDGGTNVDETRVAVTTAVIGRLNGN.

An ATP-binding site is contributed by 9 to 16; it reads GIEGCGKT.

This sequence belongs to the thymidylate kinase family.

The enzyme catalyses dTMP + ATP = dTDP + ADP. In terms of biological role, phosphorylation of dTMP to form dTDP in both de novo and salvage pathways of dTTP synthesis. This chain is Thymidylate kinase, found in Geotalea daltonii (strain DSM 22248 / JCM 15807 / FRC-32) (Geobacter daltonii).